The primary structure comprises 135 residues: uncharacterized protein (135 aa).

This is an uncharacterized protein from Homo sapiens (Human).